Reading from the N-terminus, the 438-residue chain is Flagellum-specific ATP synthase (438 aa).

Residues 119–139 form a disordered region; sequence GLSPVSTEQSPPNPMKRPPIR. 165–172 contributes to the ATP binding site; the sequence is AGSGVGKS.

This sequence belongs to the ATPase alpha/beta chains family.

It localises to the cytoplasm. It carries out the reaction ATP + H2O + 4 H(+)(in) = ADP + phosphate + 5 H(+)(out). In terms of biological role, probable catalytic subunit of a protein translocase for flagellum-specific export, or a proton translocase involved in local circuits at the flagellum. The sequence is that of Flagellum-specific ATP synthase (fliI) from Bacillus subtilis (strain 168).